Reading from the N-terminus, the 22-residue chain is leu leader peptide (22 aa).

A disordered region spans residues 1 to 22 (MLHHMTSRANLLLLRRGGSQRS). Positions 11-22 (LLLLRRGGSQRS) are enriched in low complexity.

Involved in control of the biosynthesis of leucine. This chain is leu leader peptide (leuL), found in Corynebacterium glutamicum (strain ATCC 13032 / DSM 20300 / JCM 1318 / BCRC 11384 / CCUG 27702 / LMG 3730 / NBRC 12168 / NCIMB 10025 / NRRL B-2784 / 534).